Consider the following 312-residue polypeptide: Probable deoxyhypusine synthase (312 aa).

The Nucleophile role is filled by Lys285.

It belongs to the deoxyhypusine synthase family. It depends on NAD(+) as a cofactor.

It carries out the reaction [eIF5A protein]-L-lysine + spermidine = [eIF5A protein]-deoxyhypusine + propane-1,3-diamine. It participates in protein modification; eIF5A hypusination. Catalyzes the NAD-dependent oxidative cleavage of spermidine and the subsequent transfer of the butylamine moiety of spermidine to the epsilon-amino group of a specific lysine residue of the eIF-5A precursor protein to form the intermediate deoxyhypusine residue. The sequence is that of Probable deoxyhypusine synthase from Saccharolobus islandicus (strain Y.N.15.51 / Yellowstone #2) (Sulfolobus islandicus).